Consider the following 169-residue polypeptide: Endoribonuclease YbeY (169 aa).

3 residues coordinate Zn(2+): His126, His130, and His136.

Belongs to the endoribonuclease YbeY family. Zn(2+) is required as a cofactor.

The protein resides in the cytoplasm. Functionally, single strand-specific metallo-endoribonuclease involved in late-stage 70S ribosome quality control and in maturation of the 3' terminus of the 16S rRNA. This chain is Endoribonuclease YbeY, found in Bradyrhizobium sp. (strain BTAi1 / ATCC BAA-1182).